The primary structure comprises 422 residues: L-threonine dehydratase biosynthetic IlvA (422 aa).

An N6-(pyridoxal phosphate)lysine modification is found at K56. Pyridoxal 5'-phosphate-binding positions include N83, 189–193, and S315; that span reads GGGGL. Residues 339 to 413 enclose the ACT-like domain; sequence HYFILNFPQR…FDPSNIYINE (75 aa).

This sequence belongs to the serine/threonine dehydratase family. In terms of assembly, homotetramer. Requires pyridoxal 5'-phosphate as cofactor.

The enzyme catalyses L-threonine = 2-oxobutanoate + NH4(+). It participates in amino-acid biosynthesis; L-isoleucine biosynthesis; 2-oxobutanoate from L-threonine: step 1/1. In terms of biological role, catalyzes the anaerobic formation of alpha-ketobutyrate and ammonia from threonine in a two-step reaction. The first step involved a dehydration of threonine and a production of enamine intermediates (aminocrotonate), which tautomerizes to its imine form (iminobutyrate). Both intermediates are unstable and short-lived. The second step is the nonenzymatic hydrolysis of the enamine/imine intermediates to form 2-ketobutyrate and free ammonia. In the low water environment of the cell, the second step is accelerated by RidA. The sequence is that of L-threonine dehydratase biosynthetic IlvA (ilvA) from Staphylococcus aureus (strain Mu50 / ATCC 700699).